The primary structure comprises 1331 residues: ABC multidrug transporter MDR2 (1331 aa).

2 stretches are compositionally biased toward basic and acidic residues: residues 1 to 20 (MVEV…KQEN) and 31 to 41 (SDKEKVAKKGN). Residues 1-51 (MVEVSEKPNTQDDGVSKQENRNPASSSSSTSDKEKVAKKGNSDATKSSTPE) form a disordered region. 4 consecutive transmembrane segments (helical) span residues 93-113 (MIFL…LPLF), 147-167 (YFVY…VGFI), 219-239 (KVGL…IGYV), and 242-262 (WKLA…MGGI). One can recognise an ABC transmembrane type-1 1 domain in the interval 97–387 (AIVSLASIAA…VAPNTQAFAS (291 aa)). N-linked (GlcNAc...) asparagine glycosylation is present at asparagine 293. Transmembrane regions (helical) follow at residues 325-345 (LGIM…LGFW) and 358-378 (LSAI…IGNV). The 246-residue stretch at 422 to 667 (IEFRGIKHIY…KGTYLQLVEA (246 aa)) folds into the ABC transporter 1 domain. 457 to 464 (GPSGSGKS) is an ATP binding site. Residues asparagine 529 and asparagine 737 are each glycosylated (N-linked (GlcNAc...) asparagine). A run of 2 helical transmembrane segments spans residues 762-782 (LCGF…SVFF) and 810-830 (FLML…IFAI). One can recognise an ABC transmembrane type-1 2 domain in the interval 764 to 1051 (GFFFAVLSGA…VFSFSPDMGK (288 aa)). Asparagine 860 carries N-linked (GlcNAc...) asparagine glycosylation. 4 helical membrane passes run 884-904 (LGTI…ALAF), 910-930 (LVCI…FWIL), 995-1015 (ASQS…GGLL), and 1025-1045 (FFLC…VFSF). Residues 1086–1324 (IEFRDVHFRY…KGRYYELVHM (239 aa)) enclose the ABC transporter 2 domain. Asparagine 1108 carries N-linked (GlcNAc...) asparagine glycosylation. ATP is bound at residue 1121 to 1128 (GPSGCGKS).

This sequence belongs to the ABC transporter superfamily. ABCB family. Multidrug resistance exporter (TC 3.A.1.201) subfamily.

Its subcellular location is the cell membrane. It catalyses the reaction itraconazole(in) + ATP + H2O = itraconazole(out) + ADP + phosphate + H(+). Pleiotropic ABC efflux transporter that may be involved in the modulation susceptibility to a wide range of unrelated cytotoxic compounds. The sequence is that of ABC multidrug transporter MDR2 from Trichophyton equinum (strain ATCC MYA-4606 / CBS 127.97) (Horse ringworm fungus).